The sequence spans 300 residues: Porphobilinogen deaminase (300 aa).

An S-(dipyrrolylmethanemethyl)cysteine modification is found at Cys242.

It belongs to the HMBS family. As to quaternary structure, monomer. Requires dipyrromethane as cofactor.

The enzyme catalyses 4 porphobilinogen + H2O = hydroxymethylbilane + 4 NH4(+). Its pathway is porphyrin-containing compound metabolism; protoporphyrin-IX biosynthesis; coproporphyrinogen-III from 5-aminolevulinate: step 2/4. Its function is as follows. Tetrapolymerization of the monopyrrole PBG into the hydroxymethylbilane pre-uroporphyrinogen in several discrete steps. This chain is Porphobilinogen deaminase, found in Rickettsia bellii (strain OSU 85-389).